A 121-amino-acid chain; its full sequence is C-type natriuretic peptide 4 (121 aa).

The signal sequence occupies residues 1-22 (MNLSYLVACGLLVTFLSDKMDA). Positions 23-96 (QPLTPAQQKS…SRRHKSGSKK (74 aa)) are excised as a propeptide. Residues 80–109 (LLNDQPASRRHKSGSKKGGSTSRSGCFGHK) are disordered. Cysteines 105 and 121 form a disulfide.

This sequence belongs to the natriuretic peptide family. As to expression, brain, spinal cord, spleen, heart and fin, and to a lower extent in gill and ovary.

Its subcellular location is the secreted. Exhibits natriuretic and vasodepressant activity. Has cGMP-stimulating activity. May help to regulate body fluid homeostasis in a variety of aquatic environments. The protein is C-type natriuretic peptide 4 of Oryzias latipes (Japanese rice fish).